The following is a 177-amino-acid chain: MTDSCTLNKKSSYTYEDLLASSRGELFGPKGPQLPAPTMLMMDRVIEMNETGGNYGKGYVEAELDIKPDLFFFGCHFIGDPVMPGCLGLDAMWQLVGFYLGWIGGEGKGRALGVGEVKFTGQILPTAKKVIYRIHLKRVINRKLVMGLADGEVEVDGRVIYTATDLKVGLFQDMSTF.

Residue H76 is part of the active site.

This sequence belongs to the thioester dehydratase family. FabA subfamily. Homodimer.

It is found in the cytoplasm. The enzyme catalyses a (3R)-hydroxyacyl-[ACP] = a (2E)-enoyl-[ACP] + H2O. The catalysed reaction is (3R)-hydroxydecanoyl-[ACP] = (2E)-decenoyl-[ACP] + H2O. It carries out the reaction (2E)-decenoyl-[ACP] = (3Z)-decenoyl-[ACP]. It participates in lipid metabolism; fatty acid biosynthesis. Functionally, necessary for the introduction of cis unsaturation into fatty acids. Catalyzes the dehydration of (3R)-3-hydroxydecanoyl-ACP to E-(2)-decenoyl-ACP and then its isomerization to Z-(3)-decenoyl-ACP. Can catalyze the dehydratase reaction for beta-hydroxyacyl-ACPs with saturated chain lengths up to 16:0, being most active on intermediate chain length. This is 3-hydroxydecanoyl-[acyl-carrier-protein] dehydratase from Mannheimia succiniciproducens (strain KCTC 0769BP / MBEL55E).